An 83-amino-acid polypeptide reads, in one-letter code: Small ribosomal subunit protein uS17 (83 aa).

It belongs to the universal ribosomal protein uS17 family. As to quaternary structure, part of the 30S ribosomal subunit.

In terms of biological role, one of the primary rRNA binding proteins, it binds specifically to the 5'-end of 16S ribosomal RNA. This chain is Small ribosomal subunit protein uS17, found in Ehrlichia chaffeensis (strain ATCC CRL-10679 / Arkansas).